Reading from the N-terminus, the 284-residue chain is Probable 3-mercaptopyruvate sulfurtransferase (284 aa).

Rhodanese domains follow at residues Ser17–Asn138 and Gly168–Ala281. Arg182 lines the substrate pocket. Cys241 functions as the Cysteine persulfide intermediate in the catalytic mechanism. A substrate specificity region spans residues Cys241 to Ala247.

It is found in the cytoplasm. The catalysed reaction is 2-oxo-3-sulfanylpropanoate + [thioredoxin]-dithiol = [thioredoxin]-disulfide + hydrogen sulfide + pyruvate + H(+). In terms of biological role, catalyzes the transfer of sulfur from 3-mercaptopyruvate to a thiol-containing acceptor to form an intramolecular disulfide releasing hydrogen sulfide and pyruvate. This chain is Probable 3-mercaptopyruvate sulfurtransferase (sseA), found in Pseudomonas aeruginosa (strain ATCC 15692 / DSM 22644 / CIP 104116 / JCM 14847 / LMG 12228 / 1C / PRS 101 / PAO1).